A 334-amino-acid polypeptide reads, in one-letter code: Holliday junction branch migration complex subunit RuvB (334 aa).

The segment at 1–182 (MDDRMVDQSM…FGVHLRLEYY (182 aa)) is large ATPase domain (RuvB-L). ATP is bound by residues L21, R22, G63, K66, T67, T68, 129 to 131 (EDF), R172, Y182, and R219. Residue T67 coordinates Mg(2+). The segment at 183–253 (QELELKEIIV…TTRASLQLLQ (71 aa)) is small ATPAse domain (RuvB-S). The interval 256–334 (DEGLDYIDHK…HFSKKNGKKE (79 aa)) is head domain (RuvB-H). 3 residues coordinate DNA: R292, R311, and R316.

Belongs to the RuvB family. As to quaternary structure, homohexamer. Forms an RuvA(8)-RuvB(12)-Holliday junction (HJ) complex. HJ DNA is sandwiched between 2 RuvA tetramers; dsDNA enters through RuvA and exits via RuvB. An RuvB hexamer assembles on each DNA strand where it exits the tetramer. Each RuvB hexamer is contacted by two RuvA subunits (via domain III) on 2 adjacent RuvB subunits; this complex drives branch migration. In the full resolvosome a probable DNA-RuvA(4)-RuvB(12)-RuvC(2) complex forms which resolves the HJ.

The protein resides in the cytoplasm. It carries out the reaction ATP + H2O = ADP + phosphate + H(+). In terms of biological role, the RuvA-RuvB-RuvC complex processes Holliday junction (HJ) DNA during genetic recombination and DNA repair, while the RuvA-RuvB complex plays an important role in the rescue of blocked DNA replication forks via replication fork reversal (RFR). RuvA specifically binds to HJ cruciform DNA, conferring on it an open structure. The RuvB hexamer acts as an ATP-dependent pump, pulling dsDNA into and through the RuvAB complex. RuvB forms 2 homohexamers on either side of HJ DNA bound by 1 or 2 RuvA tetramers; 4 subunits per hexamer contact DNA at a time. Coordinated motions by a converter formed by DNA-disengaged RuvB subunits stimulates ATP hydrolysis and nucleotide exchange. Immobilization of the converter enables RuvB to convert the ATP-contained energy into a lever motion, pulling 2 nucleotides of DNA out of the RuvA tetramer per ATP hydrolyzed, thus driving DNA branch migration. The RuvB motors rotate together with the DNA substrate, which together with the progressing nucleotide cycle form the mechanistic basis for DNA recombination by continuous HJ branch migration. Branch migration allows RuvC to scan DNA until it finds its consensus sequence, where it cleaves and resolves cruciform DNA. The chain is Holliday junction branch migration complex subunit RuvB from Staphylococcus saprophyticus subsp. saprophyticus (strain ATCC 15305 / DSM 20229 / NCIMB 8711 / NCTC 7292 / S-41).